Here is a 176-residue protein sequence, read N- to C-terminus: 3-hydroxydecanoyl-[acyl-carrier-protein] dehydratase (176 aa).

Residue histidine 71 is part of the active site.

The protein belongs to the thioester dehydratase family. FabA subfamily. Homodimer.

It localises to the cytoplasm. The enzyme catalyses a (3R)-hydroxyacyl-[ACP] = a (2E)-enoyl-[ACP] + H2O. The catalysed reaction is (3R)-hydroxydecanoyl-[ACP] = (2E)-decenoyl-[ACP] + H2O. It carries out the reaction (2E)-decenoyl-[ACP] = (3Z)-decenoyl-[ACP]. Its pathway is lipid metabolism; fatty acid biosynthesis. Necessary for the introduction of cis unsaturation into fatty acids. Catalyzes the dehydration of (3R)-3-hydroxydecanoyl-ACP to E-(2)-decenoyl-ACP and then its isomerization to Z-(3)-decenoyl-ACP. Can catalyze the dehydratase reaction for beta-hydroxyacyl-ACPs with saturated chain lengths up to 16:0, being most active on intermediate chain length. The protein is 3-hydroxydecanoyl-[acyl-carrier-protein] dehydratase of Rhodopseudomonas palustris (strain BisB18).